We begin with the raw amino-acid sequence, 504 residues long: L-arabinose isomerase (504 aa).

The Mn(2+) site is built by Glu-308, Glu-335, His-352, and His-452.

It belongs to the arabinose isomerase family. Mn(2+) serves as cofactor.

The enzyme catalyses beta-L-arabinopyranose = L-ribulose. Its pathway is carbohydrate degradation; L-arabinose degradation via L-ribulose; D-xylulose 5-phosphate from L-arabinose (bacterial route): step 1/3. In terms of biological role, catalyzes the conversion of L-arabinose to L-ribulose. The polypeptide is L-arabinose isomerase (Bifidobacterium adolescentis (strain ATCC 15703 / DSM 20083 / NCTC 11814 / E194a)).